The following is a 184-amino-acid chain: Adenine phosphoribosyltransferase 2 (184 aa).

The protein belongs to the purine/pyrimidine phosphoribosyltransferase family. As to quaternary structure, homodimer.

Its subcellular location is the cytoplasm. The catalysed reaction is AMP + diphosphate = 5-phospho-alpha-D-ribose 1-diphosphate + adenine. Its pathway is purine metabolism; AMP biosynthesis via salvage pathway; AMP from adenine: step 1/1. Its function is as follows. Catalyzes a salvage reaction resulting in the formation of AMP, that is energically less costly than de novo synthesis. This is Adenine phosphoribosyltransferase 2 from Rhizobium etli (strain ATCC 51251 / DSM 11541 / JCM 21823 / NBRC 15573 / CFN 42).